Reading from the N-terminus, the 21-residue chain is C-phycocyanin alpha subunit (21 aa).

The protein belongs to the phycobiliprotein family. In terms of assembly, heterodimer of an alpha and a beta subunit, which further assembles into trimers and the trimers into hexamers. In terms of processing, contains one covalently linked bilin chromophore.

Its subcellular location is the cellular thylakoid membrane. Functionally, light-harvesting photosynthetic bile pigment-protein from the phycobiliprotein complex (phycobilisome, PBS). Phycocyanin is the major phycobiliprotein in the PBS rod. The polypeptide is C-phycocyanin alpha subunit (Anabaena sp. (strain L31)).